The primary structure comprises 429 residues: Histidinol dehydrogenase (429 aa).

Residues Y130, Q191, and N214 each contribute to the NAD(+) site. S237, Q259, and H262 together coordinate substrate. Zn(2+)-binding residues include Q259 and H262. Residues E327 and H328 each act as proton acceptor in the active site. The substrate site is built by H328, D361, E415, and H420. A Zn(2+)-binding site is contributed by D361. Zn(2+) is bound at residue H420.

The protein belongs to the histidinol dehydrogenase family. It depends on Zn(2+) as a cofactor.

The catalysed reaction is L-histidinol + 2 NAD(+) + H2O = L-histidine + 2 NADH + 3 H(+). The protein operates within amino-acid biosynthesis; L-histidine biosynthesis; L-histidine from 5-phospho-alpha-D-ribose 1-diphosphate: step 9/9. Its function is as follows. Catalyzes the sequential NAD-dependent oxidations of L-histidinol to L-histidinaldehyde and then to L-histidine. The chain is Histidinol dehydrogenase from Neisseria meningitidis serogroup B (strain ATCC BAA-335 / MC58).